Here is a 574-residue protein sequence, read N- to C-terminus: MALARGSRQLGALVWGACLCVLVHGQQAQPGQGSDPARWRQLIQWENNGQVYSLLNSGSEYVPAGPQRSESSSRVLLAGAPQAQQRRSHGSPRRRQAPSLPLPGRVGSDTVRGQARHPFGFGQVPDNWREVAVGDSTGMARARTSVSQQRHGGSASSVSASAFASTYRQQPSYPQQFPYPQAPFVSQYENYDPASRTYDQGFVYYRPAGGGVGAGAAAVASAGVIYPYQPRARYEEYGGGEELPEYPPQGFYPAPERPYVPPPPPPPDGLDRRYSHSLYSEGTPGFEQAYPDPGPEAAQAHGGDPRLGWYPPYANPPPEAYGPPRALEPPYLPVRSSDTPPPGGERNGAQQGRLSVGSVYRPNQNGRGLPDLVPDPNYVQASTYVQRAHLYSLRCAAEEKCLASTAYAPEATDYDVRVLLRFPQRVKNQGTADFLPNRPRHTWEWHSCHQHYHSMDEFSHYDLLDAATGKKVAEGHKASFCLEDSTCDFGNLKRYACTSHTQGLSPGCYDTYNADIDCQWIDITDVQPGNYILKVHVNPKYIVLESDFTNNVVRCNIHYTGRYVSATNCKIVQS.

A signal peptide spans 1 to 25 (MALARGSRQLGALVWGACLCVLVHG). Residues 26 to 95 (QQAQPGQGSD…RRSHGSPRRR (70 aa)) constitute a propeptide that is removed on maturation. Disordered stretches follow at residues 62 to 123 (VPAG…GFGQ) and 239 to 374 (GGEE…DLVP). Positions 86 to 96 (RRSHGSPRRRQ) are enriched in basic residues. Composition is skewed to pro residues over residues 255 to 268 (PERP…PPPD) and 313 to 332 (YANP…PPYL). Residues 311-369 (PPYANPPPEAYGPPRALEPPYLPVRSSDTPPPGGERNGAQQGRLSVGSVYRPNQNGRGL) are interaction with FBLN5. The interval 370–574 (PDLVPDPNYV…SATNCKIVQS (205 aa)) is lysyl-oxidase like. Intrachain disulfides connect Cys395–Cys401, Cys448–Cys497, Cys481–Cys487, Cys508–Cys518, and Cys555–Cys569. 3 residues coordinate Cu cation: His449, His451, and His453. Positions 477 to 512 (KASFCLEDSTCDFGNLKRYACTSHTQGLSPGCYDTY) form a cross-link, lysine tyrosylquinone (Lys-Tyr); alternate. Position 512 is a 2',4',5'-topaquinone; alternate (Tyr512).

The protein belongs to the lysyl oxidase family. As to quaternary structure, interacts (via propeptide) with EFEMP2. Interacts with FBLN5. The cofactor is Cu cation. Requires lysine tyrosylquinone residue as cofactor. In terms of processing, the lysine tyrosylquinone cross-link (LTQ) is generated by condensation of the epsilon-amino group of a lysine with a topaquinone produced by oxidation of tyrosine. Post-translationally, proteolytic processing by a furin-like protease causes removal of N-terminal propeptide resulting in an enzyme largely inactive, but further proteolytic processing by BMP1 results in enzyme activation. Expressed in ocular tissues including the iris, ciliary body, lens and optic nerve. Not detected in the retina.

Its subcellular location is the secreted. It is found in the extracellular space. It localises to the extracellular matrix. The enzyme catalyses L-lysyl-[protein] + O2 + H2O = (S)-2-amino-6-oxohexanoyl-[protein] + H2O2 + NH4(+). In terms of biological role, catalyzes the oxidative deamination of lysine and hydroxylysine residues in collagen and elastin, resulting in the formation of covalent cross-linkages, and the stabilization of collagen and elastin fibers. Essential for the elastic fiber homeostasis and for their maintenance at adult age. In Homo sapiens (Human), this protein is Lysyl oxidase homolog 1 (LOXL1).